Consider the following 327-residue polypeptide: Aspartate--ammonia ligase (327 aa).

The protein belongs to the class-II aminoacyl-tRNA synthetase family. AsnA subfamily.

It localises to the cytoplasm. The enzyme catalyses L-aspartate + NH4(+) + ATP = L-asparagine + AMP + diphosphate + H(+). It functions in the pathway amino-acid biosynthesis; L-asparagine biosynthesis; L-asparagine from L-aspartate (ammonia route): step 1/1. This chain is Aspartate--ammonia ligase, found in Bacillus cereus (strain AH820).